We begin with the raw amino-acid sequence, 699 residues long: Elongation factor G (699 aa).

The 281-residue stretch at 8–288 (EDYRNFGIMA…AVVDYLPSPL (281 aa)) folds into the tr-type G domain. Residues 17–24 (AHIDAGKT), 86–90 (DTPGH), and 140–143 (NKMD) contribute to the GTP site.

The protein belongs to the TRAFAC class translation factor GTPase superfamily. Classic translation factor GTPase family. EF-G/EF-2 subfamily.

Its subcellular location is the cytoplasm. Functionally, catalyzes the GTP-dependent ribosomal translocation step during translation elongation. During this step, the ribosome changes from the pre-translocational (PRE) to the post-translocational (POST) state as the newly formed A-site-bound peptidyl-tRNA and P-site-bound deacylated tRNA move to the P and E sites, respectively. Catalyzes the coordinated movement of the two tRNA molecules, the mRNA and conformational changes in the ribosome. This Rhizobium etli (strain ATCC 51251 / DSM 11541 / JCM 21823 / NBRC 15573 / CFN 42) protein is Elongation factor G.